A 343-amino-acid chain; its full sequence is General transcription and DNA repair factor IIH subunit TFB6 (343 aa).

At Tyr69 the chain carries Phosphotyrosine. 2 positions are modified to phosphothreonine: Thr71 and Thr84. 4 positions are modified to phosphoserine: Ser104, Ser105, Ser108, and Ser342.

As to quaternary structure, component of the general transcription factor TFIIH, composed of a 7-subunit TFIIH core complex composed of XPB/SSL2, XPD/RAD3, SSL1, TFB1, TFB2, TFB4 and TFB5 which is active in NER; the 3-subunit CTD-kinase module TFIIK composed of CCL1, KIN28, and TFB3 which is active in transcription; as well as TFB6 that regulates SSL2 association with the complex. In terms of processing, phosphorylation leads the dissociation of from SSL2.

The protein localises to the cytoplasm. It is found in the nucleus. Functionally, component of the general transcription and DNA repair factor IIH (TFIIH) core complex, which is involved in general and transcription-coupled nucleotide excision repair (NER) of damaged DNA and, when complexed to TFIIK, in RNA transcription by RNA polymerase II. In NER, TFIIH acts by opening DNA around the lesion to allow the excision of the damaged oligonucleotide and its replacement by a new DNA fragment. In transcription, TFIIH has an essential role in transcription initiation. When the pre-initiation complex (PIC) has been established, TFIIH is required for promoter opening and promoter escape. Phosphorylation of the C-terminal tail (CTD) of the largest subunit of RNA polymerase II by the kinase module TFIIK controls the initiation of transcription. TFB6 facilitates dissociation of the SSL2 helicase from TFIIH after transcription initiation. This Saccharomyces cerevisiae (strain ATCC 204508 / S288c) (Baker's yeast) protein is General transcription and DNA repair factor IIH subunit TFB6.